Here is a 440-residue protein sequence, read N- to C-terminus: tRNA(Ile)-lysidine synthase (440 aa).

28-33 (SGGMDS) is a binding site for ATP.

The protein belongs to the tRNA(Ile)-lysidine synthase family.

The protein resides in the cytoplasm. It catalyses the reaction cytidine(34) in tRNA(Ile2) + L-lysine + ATP = lysidine(34) in tRNA(Ile2) + AMP + diphosphate + H(+). Functionally, ligates lysine onto the cytidine present at position 34 of the AUA codon-specific tRNA(Ile) that contains the anticodon CAU, in an ATP-dependent manner. Cytidine is converted to lysidine, thus changing the amino acid specificity of the tRNA from methionine to isoleucine. The polypeptide is tRNA(Ile)-lysidine synthase (Xanthomonas axonopodis pv. citri (strain 306)).